The following is a 479-amino-acid chain: Shugoshin (479 aa).

Positions 36–76 (SLRIRSLESEVSNLLSENVSLREQIITLTQELERFEAARTL) form a coiled coil. Disordered stretches follow at residues 109-145 (SRAV…GFLD), 220-247 (EHSL…QADT), and 263-479 (AKRK…SMPP). Residues 123 to 132 (QSRESGPKEV) are compositionally biased toward basic and acidic residues. Residues 270–286 (EDDESLFESSPSEDDEF) are compositionally biased toward acidic residues. Composition is skewed to polar residues over residues 290 to 303 (RPAQ…QNEH) and 318 to 328 (QSPTLSSQNDH). 2 stretches are compositionally biased toward basic and acidic residues: residues 335 to 352 (PQSE…RVLE) and 379 to 388 (GYNEKSEKPL). A compositionally biased stretch (polar residues) spans 400-411 (KNASPKKSSTRT).

The protein belongs to the shugoshin family.

It localises to the nucleus. The protein resides in the chromosome. Its subcellular location is the centromere. Its function is as follows. Plays a central role in chromosome cohesion during cell division by preventing premature dissociation of cohesin complex from centromeres after prophase, when most of cohesin complex dissociates from chromosomes arms. The chain is Shugoshin (sgo1) from Emericella nidulans (strain FGSC A4 / ATCC 38163 / CBS 112.46 / NRRL 194 / M139) (Aspergillus nidulans).